The sequence spans 346 residues: UDP-N-acetylenolpyruvoylglucosamine reductase (346 aa).

Residues 18–189 (LRAQARAFIA…VSVVFALKTH (172 aa)) enclose the FAD-binding PCMH-type domain. Arg-165 is a catalytic residue. The active-site Proton donor is the Ser-240. The active site involves Glu-336.

The protein belongs to the MurB family. The cofactor is FAD.

The protein resides in the cytoplasm. It catalyses the reaction UDP-N-acetyl-alpha-D-muramate + NADP(+) = UDP-N-acetyl-3-O-(1-carboxyvinyl)-alpha-D-glucosamine + NADPH + H(+). The protein operates within cell wall biogenesis; peptidoglycan biosynthesis. Functionally, cell wall formation. This chain is UDP-N-acetylenolpyruvoylglucosamine reductase, found in Neisseria meningitidis serogroup B (strain ATCC BAA-335 / MC58).